The chain runs to 632 residues: Phospholipid:diacylglycerol acyltransferase (632 aa).

Positions 1-15 are enriched in basic residues; sequence MASSKKSKTHKKKKE. The disordered stretch occupies residues 1–47; that stretch reads MASSKKSKTHKKKKEVKSPIDLPNSKKPTRALSEQPSASETQSVSNK. Residues 1–56 lie on the Cytoplasmic side of the membrane; the sequence is MASSKKSKTHKKKKEVKSPIDLPNSKKPTRALSEQPSASETQSVSNKSRKSKFGKR. The span at 32 to 46 shows a compositional bias: polar residues; it reads LSEQPSASETQSVSN. A helical membrane pass occupies residues 57–77; it reads LNFILGAILGICGAFFFAVGD. Residues 78-632 lie on the Lumenal side of the membrane; the sequence is DNAVFDPATL…NEINLDKPRN (555 aa). D136 contributes to the substrate binding site. Residue S293 is the Acyl-ester intermediate of the active site. M294 is a binding site for substrate. Residues D535 and H586 each act as charge relay system in the active site.

It belongs to the AB hydrolase superfamily. Lipase family.

The protein localises to the endoplasmic reticulum membrane. The enzyme catalyses a glycerophospholipid + a 1,2-diacyl-sn-glycerol = a monoacylglycerophospholipid + a triacyl-sn-glycerol. It participates in glycerolipid metabolism; triacylglycerol biosynthesis. Its function is as follows. Catalyzes triacylglycerol (TAG) formation by an acyl-CoA independent pathway. The enzyme specifically transfers acyl groups from the sn-2 position of a phospholipid to diacylglycerol (DAG), thus forming an sn-1-lysophospholipid. Plays a major role in triacylglycerol formation at log phase. Involved in lipid particle synthesis from the endoplasmic reticulum, promoting localized TAG production at discrete ER subdomains. The chain is Phospholipid:diacylglycerol acyltransferase (plh1) from Schizosaccharomyces pombe (strain 972 / ATCC 24843) (Fission yeast).